The chain runs to 550 residues: Dipeptide-binding protein (550 aa).

The N-terminal stretch at M1 to A22 is a signal peptide. C23 is lipidated: N-palmitoyl cysteine. A lipid anchor (S-diacylglycerol cysteine) is attached at C23.

Belongs to the bacterial solute-binding protein 5 family. In terms of assembly, the complex is composed of two ATP-binding proteins (DppD and DppF), two transmembrane proteins (DppB and DppC) and a solute-binding protein (DppA).

It is found in the cell membrane. Functionally, part of the ABC transporter DppABCDF involved in dipeptide transport. Binds di- and tripeptides with high affinity. Requires a free N-terminal alpha-amino group and an alpha-peptide bound contiguous with the N-terminal amino group, has a strong selectivity for L-residues, and shows preference for dipeptides containing methionine or arginine, followed by hydrophobic tripeptides consisting of leucine or valine residues. The polypeptide is Dipeptide-binding protein (Lactococcus lactis subsp. cremoris (strain MG1363)).